The primary structure comprises 361 residues: Trehalose 6-phosphate phosphatase RA3 (361 aa).

Belongs to the trehalose phosphatase family. A divalent metal cation serves as cofactor. In terms of tissue distribution, expressed in axillary inflorescence meristems.

The catalysed reaction is alpha,alpha-trehalose 6-phosphate + H2O = alpha,alpha-trehalose + phosphate. Its pathway is glycan biosynthesis; trehalose biosynthesis. Removes the phosphate from trehalose 6-phosphate to produce free trehalose. Is specific for trehalose 6-phosphate. Does not possess activity toward glucose, sucrose or fructose 6-phosphates. Regulates inflorescence branching. Required to establish the correct identity and determinacy of axillary meristems in both male and female inflorescences. May act through a sugar signal that moves into axillary meristems. Acts upstream of RA1. May have a transcriptional regulatory function. In Zea mays (Maize), this protein is Trehalose 6-phosphate phosphatase RA3.